We begin with the raw amino-acid sequence, 96 residues long: Co-chaperonin GroES (96 aa).

It belongs to the GroES chaperonin family. As to quaternary structure, heptamer of 7 subunits arranged in a ring. Interacts with the chaperonin GroEL.

The protein localises to the cytoplasm. Together with the chaperonin GroEL, plays an essential role in assisting protein folding. The GroEL-GroES system forms a nano-cage that allows encapsulation of the non-native substrate proteins and provides a physical environment optimized to promote and accelerate protein folding. GroES binds to the apical surface of the GroEL ring, thereby capping the opening of the GroEL channel. The polypeptide is Co-chaperonin GroES (Legionella pneumophila (strain Paris)).